A 519-amino-acid polypeptide reads, in one-letter code: DDB1- and CUL4-associated factor 17 (519 aa).

2 helical membrane passes run 186-206 (VLLYLAVFRVLPFSLVGILEI) and 222-242 (GILIVMYSSGLVRLYSFQAII).

As to quaternary structure, interacts with DDB1, CUL4A and CUL4B. As to expression, ubiquitously expressed in the embryo, with higher expression in brain, liver and skin tissues.

It is found in the membrane. It localises to the nucleus. The protein localises to the nucleolus. Its pathway is protein modification; protein ubiquitination. May function as a substrate receptor for CUL4-DDB1 E3 ubiquitin-protein ligase complex. In Mus musculus (Mouse), this protein is DDB1- and CUL4-associated factor 17 (Dcaf17).